Consider the following 358-residue polypeptide: Arginine kinase (358 aa).

One can recognise a Phosphagen kinase N-terminal domain in the interval 6–88; it reads SVEELWAKLD…LDAVIKEYHK (83 aa). 61–65 is a substrate binding site; it reads GVGIY. The Phosphagen kinase C-terminal domain maps to 116-353; sequence YIVSTRVRVG…EACLAKEKEL (238 aa). ATP is bound by residues 119–123 and His-182; that span reads STRVR. Residue Glu-222 coordinates substrate. Arg-226 serves as a coordination point for ATP. Cys-269 contributes to the substrate binding site. Residues 278–282 and 306–311 contribute to the ATP site; these read RASVH and RGIHGE. A substrate-binding site is contributed by Glu-311.

It belongs to the ATP:guanido phosphotransferase family. In terms of assembly, monomer.

It carries out the reaction L-arginine + ATP = N(omega)-phospho-L-arginine + ADP + H(+). In Haliotis madaka (Giant abalone), this protein is Arginine kinase.